Consider the following 489-residue polypeptide: Glycogen synthase (489 aa).

Position 18 (Lys-18) interacts with ADP-alpha-D-glucose.

The protein belongs to the glycosyltransferase 1 family. Bacterial/plant glycogen synthase subfamily.

It carries out the reaction [(1-&gt;4)-alpha-D-glucosyl](n) + ADP-alpha-D-glucose = [(1-&gt;4)-alpha-D-glucosyl](n+1) + ADP + H(+). The protein operates within glycan biosynthesis; glycogen biosynthesis. Its function is as follows. Synthesizes alpha-1,4-glucan chains using ADP-glucose. The protein is Glycogen synthase of Rhodopseudomonas palustris (strain BisA53).